Reading from the N-terminus, the 651-residue chain is ATP-dependent zinc metalloprotease FtsH (651 aa).

Residues M1 to P134 are Extracellular-facing. Residues W135 to M155 traverse the membrane as a helical segment. Over T156–G651 the chain is Cytoplasmic. ATP is bound at residue G229–T236. H451 serves as a coordination point for Zn(2+). The active site involves E452. Positions 455 and 527 each coordinate Zn(2+).

This sequence in the central section; belongs to the AAA ATPase family. It in the C-terminal section; belongs to the peptidase M41 family. Homohexamer. The cofactor is Zn(2+).

It is found in the cell membrane. Its function is as follows. Acts as a processive, ATP-dependent zinc metallopeptidase for both cytoplasmic and membrane proteins. Plays a role in the quality control of integral membrane proteins. The sequence is that of ATP-dependent zinc metalloprotease FtsH from Rubrobacter xylanophilus (strain DSM 9941 / JCM 11954 / NBRC 16129 / PRD-1).